The chain runs to 290 residues: Probable endonuclease 4 (290 aa).

Zn(2+) contacts are provided by His66, His106, Glu143, Asp179, His182, His216, Asp229, His231, and Glu261.

This sequence belongs to the AP endonuclease 2 family. It depends on Zn(2+) as a cofactor.

The catalysed reaction is Endonucleolytic cleavage to 5'-phosphooligonucleotide end-products.. Endonuclease IV plays a role in DNA repair. It cleaves phosphodiester bonds at apurinic or apyrimidinic (AP) sites, generating a 3'-hydroxyl group and a 5'-terminal sugar phosphate. This Solibacter usitatus (strain Ellin6076) protein is Probable endonuclease 4.